The primary structure comprises 1151 residues: Protein BREAST CANCER SUSCEPTIBILITY 2 homolog A (1151 aa).

BRCA2 repeat units lie at residues 63-97 (MPGE…EKVT), 116-150 (TAET…SDKI), 163-197 (FGVS…LEED), and 257-291 (LKVP…DPEL). Residues 408–427 (GFIPRGRQPGRPADQPLVDI) are disordered.

As to quaternary structure, interacts with RAD51 and DMC1. Interacts with DSS1(I). Expressed in flower buds.

Functionally, involved in double-strand break repair and/or homologous recombination by mediating RAD51- and DMC1-facilitated DNA repair. Plays an essential role in both somatic and meiotic homologous recombination. Is crucial for the formation of RAD51 and DMC1 foci during male meiotic homologous recombination in prophase I. The polypeptide is Protein BREAST CANCER SUSCEPTIBILITY 2 homolog A (Arabidopsis thaliana (Mouse-ear cress)).